Reading from the N-terminus, the 901-residue chain is HTH-type transcriptional regulator MalT (901 aa).

39 to 46 (SPAGYGKT) lines the ATP pocket. Positions 829-894 (ELIRTSPLTQ…DAVQHAQQLL (66 aa)) constitute an HTH luxR-type domain. The segment at residues 853–872 (NEQIAGELEVAATTIKTHIR) is a DNA-binding region (H-T-H motif).

This sequence belongs to the MalT family. In terms of assembly, monomer in solution. Oligomerizes to an active state in the presence of the positive effectors ATP and maltotriose.

Its activity is regulated as follows. Activated by ATP and maltotriose, which are both required for DNA binding. Positively regulates the transcription of the maltose regulon whose gene products are responsible for uptake and catabolism of malto-oligosaccharides. Specifically binds to the promoter region of its target genes, recognizing a short DNA motif called the MalT box. The polypeptide is HTH-type transcriptional regulator MalT (Escherichia coli (strain ATCC 8739 / DSM 1576 / NBRC 3972 / NCIMB 8545 / WDCM 00012 / Crooks)).